The chain runs to 445 residues: MEHAATLPQTSRRPATPLTGTITVPGDKSISHRALMFAGLAVGETRISGLLEGEDVLRTAAAMRALGATVERTGPGAWRASGPGIGGLQSPDDVLDMGNSGTAARLLCGILASHDIFAVMTGDASLRRRPMRRVIDPLGATGAVFAAREGGRLPLSVRGAAEAMPLSYRLPVASAQVKSALLLAGLNARGITEIEEPEPTRDHSENMLRHFGAEVEVAAHGTGKLIRLRGQPELRGADVVVPGDPSSAAFPIVAALIVPGSRVTIGGVGLNPLRTGLFLTLREMGAAIEIVNAREAGGEPVGDLIVTASDLRAVDVPAERAPSMIDEYPILAVACAMARGSSRLRGLAELRVKESDRLAATLAMITANGVKAQVDGDDLIIEGGGARGGATVATHMDHRLAMSALVMGLATETPVTIDDARFIDTSFPGFLPLMRGIGAAIEAAA.

The segment at 1-24 (MEHAATLPQTSRRPATPLTGTITV) is disordered. Polar residues predominate over residues 7–22 (LPQTSRRPATPLTGTI). The 3-phosphoshikimate site is built by K28, S29, and R33. K28 is a phosphoenolpyruvate binding site. Positions 101 and 129 each coordinate phosphoenolpyruvate. 3-phosphoshikimate contacts are provided by S174, Q176, D326, and K353. Q176 provides a ligand contact to phosphoenolpyruvate. D326 (proton acceptor) is an active-site residue. Phosphoenolpyruvate is bound by residues R357 and R399.

Belongs to the EPSP synthase family. As to quaternary structure, monomer.

The protein resides in the cytoplasm. The catalysed reaction is 3-phosphoshikimate + phosphoenolpyruvate = 5-O-(1-carboxyvinyl)-3-phosphoshikimate + phosphate. It functions in the pathway metabolic intermediate biosynthesis; chorismate biosynthesis; chorismate from D-erythrose 4-phosphate and phosphoenolpyruvate: step 6/7. Its function is as follows. Catalyzes the transfer of the enolpyruvyl moiety of phosphoenolpyruvate (PEP) to the 5-hydroxyl of shikimate-3-phosphate (S3P) to produce enolpyruvyl shikimate-3-phosphate and inorganic phosphate. The chain is 3-phosphoshikimate 1-carboxyvinyltransferase from Acidiphilium cryptum (strain JF-5).